The chain runs to 514 residues: UDP-N-acetylmuramate--L-alanine ligase (514 aa).

Residue 127-133 (GTHGKTT) coordinates ATP. Residues 495-505 (IGGTIPDIPGG) show a composition bias toward low complexity. Positions 495-514 (IGGTIPDIPGGSTPDASAAG) are disordered.

Belongs to the MurCDEF family.

It is found in the cytoplasm. It catalyses the reaction UDP-N-acetyl-alpha-D-muramate + L-alanine + ATP = UDP-N-acetyl-alpha-D-muramoyl-L-alanine + ADP + phosphate + H(+). Its pathway is cell wall biogenesis; peptidoglycan biosynthesis. Cell wall formation. In Salinispora tropica (strain ATCC BAA-916 / DSM 44818 / JCM 13857 / NBRC 105044 / CNB-440), this protein is UDP-N-acetylmuramate--L-alanine ligase.